Reading from the N-terminus, the 61-residue chain is Delta-actitoxin-Avd2c (61 aa).

A signal peptide spans 1 to 20 (MMNRLLVFLMLGAFMLVVSA). The propeptide occupies 21–31 (NDAYGGDESLG). 3 cysteine pairs are disulfide-bonded: C36/C51, C37/C45, and C39/C56.

Belongs to the sea anemone short toxin (type III) family.

It is found in the secreted. Its subcellular location is the nematocyst. Its function is as follows. Sodium channel inhibitor. 5 uM completely inhibits voltage-gated sodium channel (Nav) inactivation. This is Delta-actitoxin-Avd2c from Anemonia viridis (Snakelocks anemone).